Reading from the N-terminus, the 343-residue chain is Cathepsin Q (343 aa).

The first 20 residues, 1–20 (MTPAVFLVILCLGVVPGASA), serve as a signal peptide directing secretion. A propeptide spans 21 to 124 (LDLSLDVQWQ…FPNSWNWRDA (104 aa)) (activation peptide). Disulfide bonds link cysteine 146/cysteine 189 and cysteine 180/cysteine 222. The active site involves cysteine 149. Asparagine 228 is a glycosylation site (N-linked (GlcNAc...) asparagine). Residues cysteine 280 and cysteine 332 are joined by a disulfide bond. Histidine 286 is an active-site residue. N-linked (GlcNAc...) asparagine glycosylation is present at asparagine 298. Residue asparagine 310 is part of the active site.

Belongs to the peptidase C1 family. As to expression, highly expressed in placenta.

The protein resides in the lysosome. This Rattus norvegicus (Rat) protein is Cathepsin Q (Ctsq).